Consider the following 42-residue polypeptide: Photosystem I reaction center subunit IX (42 aa).

A helical membrane pass occupies residues 7-27 (YLSVAPVLSTLWFGSLAGLLI).

This sequence belongs to the PsaJ family.

The protein resides in the plastid. Its subcellular location is the chloroplast thylakoid membrane. May help in the organization of the PsaE and PsaF subunits. The sequence is that of Photosystem I reaction center subunit IX from Daucus carota (Wild carrot).